Consider the following 513-residue polypeptide: Maturase K (513 aa).

The protein belongs to the intron maturase 2 family. MatK subfamily.

It localises to the plastid. Its subcellular location is the chloroplast. Its function is as follows. Usually encoded in the trnK tRNA gene intron. Probably assists in splicing its own and other chloroplast group II introns. The polypeptide is Maturase K (Pinus resinosa (Red pine)).